The sequence spans 214 residues: Ribosomal RNA small subunit methyltransferase G (214 aa).

Residues glycine 77, leucine 82, 128–129 (VE), and arginine 143 each bind S-adenosyl-L-methionine.

Belongs to the methyltransferase superfamily. RNA methyltransferase RsmG family.

The protein localises to the cytoplasm. The catalysed reaction is guanosine(527) in 16S rRNA + S-adenosyl-L-methionine = N(7)-methylguanosine(527) in 16S rRNA + S-adenosyl-L-homocysteine. Functionally, specifically methylates the N7 position of guanine in position 527 of 16S rRNA. This Nitrosomonas eutropha (strain DSM 101675 / C91 / Nm57) protein is Ribosomal RNA small subunit methyltransferase G.